The following is a 461-amino-acid chain: Fumarate hydratase class II (461 aa).

Substrate contacts are provided by residues 97–99 (SGT), 127–130 (HPND), 137–139 (SSN), and Thr-185. Catalysis depends on His-186, which acts as the Proton donor/acceptor. Ser-316 is an active-site residue. Substrate is bound by residues Ser-317 and 322–324 (KVN).

This sequence belongs to the class-II fumarase/aspartase family. Fumarase subfamily. In terms of assembly, homotetramer.

It localises to the cytoplasm. It catalyses the reaction (S)-malate = fumarate + H2O. Its pathway is carbohydrate metabolism; tricarboxylic acid cycle; (S)-malate from fumarate: step 1/1. In terms of biological role, involved in the TCA cycle. Catalyzes the stereospecific interconversion of fumarate to L-malate. This is Fumarate hydratase class II from Staphylococcus aureus (strain MRSA252).